The sequence spans 221 residues: Transcription factor bHLH126 (221 aa).

Disordered stretches follow at residues 1–46 (MDPY…KKLL) and 104–132 (RRDE…VGKS). In terms of domain architecture, bHLH spans 42–94 (KKKLLHRDIERQRRQEMATLFATLRTHLPLKYIKGKRAVSDHVNGAVNFIKDT).

As to quaternary structure, homodimer.

It localises to the nucleus. This chain is Transcription factor bHLH126 (BHLH126), found in Arabidopsis thaliana (Mouse-ear cress).